The sequence spans 409 residues: Nucleoprotein (409 aa).

Disordered stretches follow at residues 1–32, 47–84, 121–145, and 164–194; these read MASG…SSGN, PQPK…KSGR, ADTK…LRFS, and RSGR…GAED. The tract at residues 29 to 160 is RNA-binding; the sequence is SSGNASWFQA…GNFRWDFIPL (132 aa). The region spanning 31 to 156 is the CoV N NTD domain; it reads GNASWFQAIK…GGPDGNFRWD (126 aa). Polar residues predominate over residues 57–68; it reads PDNNNIKPSQQH. A compositionally biased stretch (basic residues) spans 70–84; sequence YWRRQARYKPGKSGR. The segment covering 164 to 179 has biased composition (low complexity); sequence RSGRSTAASSAASSRA. A compositionally biased stretch (basic and acidic residues) spans 180–192; sequence PSREGSRGRRSGA. Ser190 is subject to Phosphoserine; by host. In terms of domain architecture, CoV N CTD spans 215-331; sequence TKAKADEMAH…QCVDGVGTRP (117 aa). The tract at residues 226–333 is dimerization; that stretch reads RYCKRTIPPG…VDGVGTRPKD (108 aa). An intrachain disulfide couples Cys320 to Cys323. The interval 326–409 is disordered; sequence GVGTRPKDDE…GDSALGENEL (84 aa). The segment covering 358 to 367 has biased composition (basic residues); that stretch reads QRPKKEKKPK. Residues 368–384 are compositionally biased toward basic and acidic residues; that stretch reads KQDDEVDKALTSDEERN. Thr378 carries the phosphothreonine; by host modification. The residue at position 379 (Ser379) is a Phosphoserine; by host.

Belongs to the gammacoronavirus nucleocapsid protein family. As to quaternary structure, homooligomer. Both monomeric and oligomeric forms interact with RNA. Interacts with protein M. Interacts with NSP3; this interaction serves to tether the genome to the newly translated replicase-transcriptase complex at a very early stage of infection. In terms of processing, ADP-ribosylated. The ADP-ribosylation is retained in the virion during infection. Post-translationally, phosphorylated on serine and threonine residues.

It is found in the virion. It localises to the host endoplasmic reticulum-Golgi intermediate compartment. The protein resides in the host Golgi apparatus. In terms of biological role, packages the positive strand viral genome RNA into a helical ribonucleocapsid (RNP) and plays a fundamental role during virion assembly through its interactions with the viral genome and membrane protein M. Plays an important role in enhancing the efficiency of subgenomic viral RNA transcription as well as viral replication. This Gallus gallus (Chicken) protein is Nucleoprotein.